We begin with the raw amino-acid sequence, 512 residues long: Cytochrome P450 monooxygenase TwmD (512 aa).

Cysteine 454 serves as a coordination point for heme.

The protein belongs to the cytochrome P450 family. Requires heme as cofactor.

The protein operates within secondary metabolite biosynthesis. Cytochrome P450 monooxygenase; part of the gene cluster that mediates the biosynthesis of wortmanamides A and B, reduced long-chain polyketides amidated with a specific omega-amino acid, 5-aminopentanoic acid (5PA). The PKS modules of TwmB are involved in the synthesis of the polyketide backbone, whereas the non-canonical C domain of TwmB is a bonafide condensation domain that specifically selects 5PA and catalyzes amidation to release polyketide chain. The C domain clearly prefers C16 and C18 fatty acyl substrates, which is consistent with simultaneous formation of both octaketide and nonaketide acyl amides wortmanamides A and B. Because TwmB lacks a designated enoylreductase (ER) domain, the required activity is provided the enoyl reductase TwmE. The roles of the remaining enzymes have still to be clarified. The chain is Cytochrome P450 monooxygenase TwmD from Talaromyces wortmannii (Penicillium wortmannii).